The primary structure comprises 394 residues: Phosphopentomutase (394 aa).

Mn(2+) contacts are provided by aspartate 13, aspartate 286, histidine 291, aspartate 327, histidine 328, and histidine 339.

Belongs to the phosphopentomutase family. Mn(2+) is required as a cofactor.

It localises to the cytoplasm. It catalyses the reaction 2-deoxy-alpha-D-ribose 1-phosphate = 2-deoxy-D-ribose 5-phosphate. The catalysed reaction is alpha-D-ribose 1-phosphate = D-ribose 5-phosphate. It functions in the pathway carbohydrate degradation; 2-deoxy-D-ribose 1-phosphate degradation; D-glyceraldehyde 3-phosphate and acetaldehyde from 2-deoxy-alpha-D-ribose 1-phosphate: step 1/2. In terms of biological role, isomerase that catalyzes the conversion of deoxy-ribose 1-phosphate (dRib-1-P) and ribose 1-phosphate (Rib-1-P) to deoxy-ribose 5-phosphate (dRib-5-P) and ribose 5-phosphate (Rib-5-P), respectively. In Bacillus cereus (strain G9842), this protein is Phosphopentomutase.